The following is a 293-amino-acid chain: Protein YIF1A (293 aa).

Residues 1 to 33 (MAYHSGYGAHGSKHRARAAPDPPPLFDDTSGGY) are disordered. Residue Ala2 is modified to N-acetylalanine. Residues 2–138 (AYHSGYGAHG…PPRQDLNAPD (137 aa)) are Cytoplasmic-facing. Ser12 carries the phosphoserine modification. Residues 139–159 (LYIPTMAFITYVLLAGMALGI) form a helical membrane-spanning segment. The Lumenal segment spans residues 160–174 (QKRFSPEVLGLCAST). Residues 175-195 (ALVWVVMEVLALLLGLYLATV) form a helical membrane-spanning segment. Topologically, residues 196-203 (RSDLSTFH) are cytoplasmic. Residues 204–226 (LLAYSGYKYVGMILSVLTGLLFG) traverse the membrane as a helical segment. The Lumenal portion of the chain corresponds to 227–229 (SDG). A helical transmembrane segment spans residues 230–249 (YYVALAWTSSALMYFIVRSL). The Cytoplasmic portion of the chain corresponds to 250–271 (RTAALGPDSMGGPVPRQRLQLY). Residues 272–292 (LTLGAAAFQPLIIYWLTFHLV) traverse the membrane as a helical segment.

This sequence belongs to the YIF1 family. In terms of assembly, interacts with YIPF5.

The protein resides in the endoplasmic reticulum membrane. It is found in the golgi apparatus membrane. The protein localises to the endoplasmic reticulum-Golgi intermediate compartment membrane. Possible role in transport between endoplasmic reticulum and Golgi. The protein is Protein YIF1A (YIF1A) of Homo sapiens (Human).